The primary structure comprises 135 residues: MLSPKRTRFRKQHRGRMKGMSYRGSHICFGRYALQALEPSWITSRQIEAGRRAMTRYARRGGKIWVRIFPDKPVTIRPAETRMGSGKGSPEYWVSVVKPGRILYEMGGVSETVARAAIEIAASKMPIRTQFIIAG.

Belongs to the universal ribosomal protein uL16 family. As to quaternary structure, part of the 50S ribosomal subunit.

It is found in the plastid. Its subcellular location is the chloroplast. In Acorus calamus var. americanus (American sweet flag), this protein is Large ribosomal subunit protein uL16c.